Consider the following 21-residue polypeptide: Dart gland peptide (21 aa).

A disordered region spans residues 1–21 (SINNTGGSGNRRLDKNGFAGQ). Residue asparagine 3 is glycosylated (N-linked (GlcNAc...) asparagine).

The protein resides in the secreted. This chain is Dart gland peptide, found in Cornu aspersum (Brown garden snail).